A 78-amino-acid polypeptide reads, in one-letter code: Translation initiation factor IF-1 (78 aa).

Residues 2–78 form the S1-like domain; sequence SKNNLNETES…TQARITYRFK (77 aa).

It belongs to the IF-1 family. In terms of assembly, component of the 30S ribosomal translation pre-initiation complex which assembles on the 30S ribosome in the order IF-2 and IF-3, IF-1 and N-formylmethionyl-tRNA(fMet); mRNA recruitment can occur at any time during PIC assembly.

The protein localises to the cytoplasm. One of the essential components for the initiation of protein synthesis. Stabilizes the binding of IF-2 and IF-3 on the 30S subunit to which N-formylmethionyl-tRNA(fMet) subsequently binds. Helps modulate mRNA selection, yielding the 30S pre-initiation complex (PIC). Upon addition of the 50S ribosomal subunit IF-1, IF-2 and IF-3 are released leaving the mature 70S translation initiation complex. This is Translation initiation factor IF-1 from Aster yellows witches'-broom phytoplasma (strain AYWB).